The sequence spans 782 residues: Endonuclease MutS2 (782 aa).

ATP is bound at residue 336–343; it reads GPNTGGKT. Residues 707–782 enclose the Smr domain; sequence LDLRGYRYED…GFGVTVATLK (76 aa).

This sequence belongs to the DNA mismatch repair MutS family. MutS2 subfamily. Homodimer. Binds to stalled ribosomes, contacting rRNA.

Its function is as follows. Endonuclease that is involved in the suppression of homologous recombination and thus may have a key role in the control of bacterial genetic diversity. Acts as a ribosome collision sensor, splitting the ribosome into its 2 subunits. Detects stalled/collided 70S ribosomes which it binds and splits by an ATP-hydrolysis driven conformational change. Acts upstream of the ribosome quality control system (RQC), a ribosome-associated complex that mediates the extraction of incompletely synthesized nascent chains from stalled ribosomes and their subsequent degradation. Probably generates substrates for RQC. The polypeptide is Endonuclease MutS2 (Staphylococcus aureus (strain Mu50 / ATCC 700699)).